The chain runs to 403 residues: Mitochondrial intermembrane space import and assembly protein 40 (403 aa).

The N-terminal 31 residues, Met-1 to Leu-31, are a transit peptide targeting the mitochondrion. Topologically, residues Ala-33–Lys-46 are mitochondrial matrix. The helical; Signal-anchor for type II membrane protein transmembrane segment at Thr-47–Pro-66 threads the bilayer. Over Asn-67–Pro-403 the chain is Mitochondrial intermembrane. 5 stretches are compositionally biased toward basic and acidic residues: residues Arg-75–Glu-84, Asn-101–Glu-118, Glu-147–Glu-168, Ser-206–Thr-230, and Glu-262–Gln-271. The interval Arg-75–Ile-292 is disordered. 3 cysteine pairs are disulfide-bonded: Cys-296–Cys-298, Cys-307–Cys-340, and Cys-317–Cys-330. The CHCH domain occupies His-304–Tyr-348. Short sequence motifs (cx9C motif) lie at residues Cys-307 to Cys-317 and Cys-330 to Cys-340. Positions Gln-351 to Pro-403 are disordered. Residues Thr-369 to Ser-378 show a composition bias toward polar residues. Basic and acidic residues predominate over residues Asn-382–Pro-403.

In terms of assembly, monomer. Interacts with the FAD-linked sulfhydryl oxidase ERV1 and with the substrate proteins COX17, TIM9, and TIM13, forming transient intermolecular disulfide bridges. Interacts with FCJ1. Cu(2+) is required as a cofactor. It depends on Zn(2+) as a cofactor.

It is found in the mitochondrion inner membrane. Required for the import and folding of small cysteine-containing proteins (small Tim) in the mitochondrial intermembrane space (IMS). Forms a redox cycle with ERV1 that involves a disulfide relay system. Precursor proteins to be imported into the IMS are translocated in their reduced form into the mitochondria. The oxidized form of MIA40 forms a transient intermolecular disulfide bridge with the reduced precursor protein, resulting in oxidation of the precursor protein that now contains an intramolecular disulfide bond and is able to undergo folding in the IMS. Reduced MIA40 is reoxidized by FAD-linked sulfhydryl oxidase ERV1. The sequence is that of Mitochondrial intermembrane space import and assembly protein 40 (MIA40) from Saccharomyces cerevisiae (strain ATCC 204508 / S288c) (Baker's yeast).